A 438-amino-acid chain; its full sequence is uncharacterized protein (438 aa).

A Zn(2+)-binding site is contributed by His-59. Glu-62 acts as the Proton acceptor in catalysis. Zn(2+) is bound by residues His-63 and Glu-139.

This sequence belongs to the peptidase M16 family. Requires Zn(2+) as cofactor.

This is an uncharacterized protein from Mycobacterium tuberculosis (strain CDC 1551 / Oshkosh).